The sequence spans 607 residues: Phosphoenolpyruvate carboxykinase [GTP] (607 aa).

Substrate-binding positions include Arg-81 and 221 to 223; that span reads YGG. Positions 230 and 250 each coordinate Mn(2+). Ser-272 is a binding site for substrate. 273-278 serves as a coordination point for GTP; it reads ACGKTN. The active site involves Cys-274. Asp-297 contributes to the Mn(2+) binding site. 388-390 is a binding site for substrate; that stretch reads NSR. GTP contacts are provided by residues Arg-390, Arg-421, and 516–519; that span reads FGDN.

It belongs to the phosphoenolpyruvate carboxykinase [GTP] family. Monomer. It depends on Mn(2+) as a cofactor.

The protein resides in the cytoplasm. The enzyme catalyses oxaloacetate + GTP = phosphoenolpyruvate + GDP + CO2. Its pathway is carbohydrate biosynthesis; gluconeogenesis. Catalyzes the conversion of oxaloacetate (OAA) to phosphoenolpyruvate (PEP), the rate-limiting step in the metabolic pathway that produces glucose from lactate and other precursors derived from the citric acid cycle. This is Phosphoenolpyruvate carboxykinase [GTP] from Renibacterium salmoninarum (strain ATCC 33209 / DSM 20767 / JCM 11484 / NBRC 15589 / NCIMB 2235).